Consider the following 230-residue polypeptide: Orotidine 5'-phosphate decarboxylase (230 aa).

Substrate contacts are provided by residues Asp10, Lys32, 59 to 68 (DLKYHDIPNT), Thr119, Arg180, Gln189, Gly209, and Arg210. Lys61 (proton donor) is an active-site residue.

The protein belongs to the OMP decarboxylase family. Type 1 subfamily. As to quaternary structure, homodimer.

The catalysed reaction is orotidine 5'-phosphate + H(+) = UMP + CO2. It participates in pyrimidine metabolism; UMP biosynthesis via de novo pathway; UMP from orotate: step 2/2. Functionally, catalyzes the decarboxylation of orotidine 5'-monophosphate (OMP) to uridine 5'-monophosphate (UMP). In Haemophilus influenzae (strain 86-028NP), this protein is Orotidine 5'-phosphate decarboxylase.